We begin with the raw amino-acid sequence, 308 residues long: Very-long-chain enoyl-CoA reductase (308 aa).

Topologically, residues 1 to 86 (MKHYEVEILD…YFRDLGAQIS (86 aa)) are cytoplasmic. Lys22 carries the post-translational modification N6-acetyllysine. Ser58 carries the phosphoserine modification. N6-acetyllysine is present on Lys60. A helical membrane pass occupies residues 87–106 (WVTVFLTEYAGPLFIYLLFY). The Lumenal portion of the chain corresponds to 107-124 (FRVPFIYGRKYDFTSSRH). Residues 125-147 (TVVHLACICHSFHYIKRLLETLF) traverse the membrane as a helical segment. Residues 148–158 (VHRFSHGTMPL) are Cytoplasmic-facing. Residues 159–180 (RNIFKNCTYYWGFAAWMAYYIN) traverse the membrane as a helical segment. At 181–189 (HPLYTPPTY) the chain is on the lumenal side. The helical transmembrane segment at 190–216 (GAQQVKLALAIFVICQLGNFSIHMALR) threads the bilayer. Over 217 to 245 (DLRPAGSKTRKIPYPTRNPFTWLFLLVSC) the chain is Cytoplasmic. The chain crosses the membrane as a helical span at residues 246–262 (PNYTYEVGSWIGFAIMT). Residues 263–264 (QC) are Lumenal-facing. A helical transmembrane segment spans residues 265–292 (LPVALFSLVGFTQMTIWAKGKHRSYLKE). Residues 293 to 308 (FRDYPPLRMPIIPFLL) are Cytoplasmic-facing.

Belongs to the steroid 5-alpha reductase family. In terms of assembly, interacts with ELOVL1 and LASS2. Glycosylated.

The protein localises to the endoplasmic reticulum membrane. The enzyme catalyses a very-long-chain 2,3-saturated fatty acyl-CoA + NADP(+) = a very-long-chain (2E)-enoyl-CoA + NADPH + H(+). It catalyses the reaction octadecanoyl-CoA + NADP(+) = (2E)-octadecenoyl-CoA + NADPH + H(+). The catalysed reaction is (2E,7Z,10Z,13Z,16Z)-docosapentaenoyl-CoA + NADPH + H(+) = (7Z,10Z,13Z,16Z)-docosatetraenoyl-CoA + NADP(+). It carries out the reaction (2E,7Z,10Z,13Z,16Z,19Z)-docosahexaenoyl-CoA + NADPH + H(+) = (7Z,10Z,13Z,16Z,19Z)-docosapentaenoyl-CoA + NADP(+). The enzyme catalyses (2E,8Z,11Z,14Z)-eicosatetraenoyl-CoA + NADPH + H(+) = (8Z,11Z,14Z)-eicosatrienoyl-CoA + NADP(+). It catalyses the reaction (2E)-hexadecenoyl-CoA + NADPH + H(+) = hexadecanoyl-CoA + NADP(+). The protein operates within lipid metabolism; fatty acid biosynthesis. Its pathway is lipid metabolism; sphingolipid metabolism. In terms of biological role, involved in both the production of very long-chain fatty acids for sphingolipid synthesis and the degradation of the sphingosine moiety in sphingolipids through the sphingosine 1-phosphate metabolic pathway. Catalyzes the last of the four reactions of the long-chain fatty acids elongation cycle. This endoplasmic reticulum-bound enzymatic process, allows the addition of 2 carbons to the chain of long- and very long-chain fatty acids/VLCFAs per cycle. This enzyme reduces the trans-2,3-enoyl-CoA fatty acid intermediate to an acyl-CoA that can be further elongated by entering a new cycle of elongation. Thereby, it participates in the production of VLCFAs of different chain lengths that are involved in multiple biological processes as precursors of membrane lipids and lipid mediators. Catalyzes the saturation step of the sphingosine 1-phosphate metabolic pathway, the conversion of trans-2-hexadecenoyl-CoA to palmitoyl-CoA. The chain is Very-long-chain enoyl-CoA reductase (TECR) from Bos taurus (Bovine).